The sequence spans 133 residues: uncharacterized protein (133 aa).

One can recognise an HIT domain in the interval 3–106 (IFTKIINREL…PTRSLSDFGF (104 aa)). A Histidine triad motif motif is present at residues 90-94 (HLHIH).

This is an uncharacterized protein from Mycobacterium tuberculosis (strain ATCC 25618 / H37Rv).